The chain runs to 156 residues: ATP synthase subunit b (156 aa).

The helical transmembrane segment at 12 to 32 (VAFLIFVLFCMKYVWPPVITA) threads the bilayer.

It belongs to the ATPase B chain family. F-type ATPases have 2 components, F(1) - the catalytic core - and F(0) - the membrane proton channel. F(1) has five subunits: alpha(3), beta(3), gamma(1), delta(1), epsilon(1). F(0) has three main subunits: a(1), b(2) and c(10-14). The alpha and beta chains form an alternating ring which encloses part of the gamma chain. F(1) is attached to F(0) by a central stalk formed by the gamma and epsilon chains, while a peripheral stalk is formed by the delta and b chains.

Its subcellular location is the cell inner membrane. F(1)F(0) ATP synthase produces ATP from ADP in the presence of a proton or sodium gradient. F-type ATPases consist of two structural domains, F(1) containing the extramembraneous catalytic core and F(0) containing the membrane proton channel, linked together by a central stalk and a peripheral stalk. During catalysis, ATP synthesis in the catalytic domain of F(1) is coupled via a rotary mechanism of the central stalk subunits to proton translocation. Functionally, component of the F(0) channel, it forms part of the peripheral stalk, linking F(1) to F(0). This is ATP synthase subunit b from Pseudomonas putida (strain ATCC 700007 / DSM 6899 / JCM 31910 / BCRC 17059 / LMG 24140 / F1).